A 217-amino-acid chain; its full sequence is Ranaspumin (217 aa).

Cystine bridges form between cysteine 18–cysteine 67, cysteine 38–cysteine 114, cysteine 125–cysteine 168, and cysteine 146–cysteine 207.

Monomer. In terms of tissue distribution, exclusively expressed in females in the early oviduct, the glandular part of the oviduct (pars convoluta dilata) and in the cloaca.

The protein localises to the secreted. Functionally, acts as a surfactant. Is the major protein constituent (45%) of foam nests. Has no antimicrobial activity, no larvicidal activity, and is not toxic to mice. The protein is Ranaspumin of Leptodactylus vastus (Northeastern pepper frog).